The primary structure comprises 298 residues: Protease HtpX homolog (298 aa).

2 helical membrane-spanning segments follow: residues 14–34 (VVLL…AGYL) and 39–59 (YAMG…SMIF). Residue H143 participates in Zn(2+) binding. E144 is an active-site residue. A Zn(2+)-binding site is contributed by H147. The next 2 membrane-spanning stretches (helical) occupy residues 158–178 (IAVA…RMLW) and 197–217 (IITL…ASLI). E226 serves as a coordination point for Zn(2+).

Belongs to the peptidase M48B family. Zn(2+) serves as cofactor.

The protein resides in the cell membrane. In Streptococcus pyogenes serotype M3 (strain SSI-1), this protein is Protease HtpX homolog.